We begin with the raw amino-acid sequence, 396 residues long: S-adenosylmethionine synthase (396 aa).

Histidine 16 serves as a coordination point for ATP. Aspartate 18 lines the Mg(2+) pocket. Glutamate 44 lines the K(+) pocket. 2 residues coordinate L-methionine: glutamate 57 and glutamine 100. The interval 100-110 is flexible loop; the sequence is QSVDINQGVDR. ATP-binding positions include 165 to 167, 231 to 232, aspartate 240, 246 to 247, alanine 263, and lysine 267; these read DAK, KF, and RK. Residue aspartate 240 participates in L-methionine binding. Residue lysine 271 coordinates L-methionine.

This sequence belongs to the AdoMet synthase family. In terms of assembly, homotetramer; dimer of dimers. It depends on Mg(2+) as a cofactor. The cofactor is K(+).

The protein localises to the cytoplasm. It catalyses the reaction L-methionine + ATP + H2O = S-adenosyl-L-methionine + phosphate + diphosphate. The protein operates within amino-acid biosynthesis; S-adenosyl-L-methionine biosynthesis; S-adenosyl-L-methionine from L-methionine: step 1/1. Its function is as follows. Catalyzes the formation of S-adenosylmethionine (AdoMet) from methionine and ATP. The overall synthetic reaction is composed of two sequential steps, AdoMet formation and the subsequent tripolyphosphate hydrolysis which occurs prior to release of AdoMet from the enzyme. The protein is S-adenosylmethionine synthase of Azotobacter vinelandii (strain DJ / ATCC BAA-1303).